A 234-amino-acid polypeptide reads, in one-letter code: Cysteine proteinase inhibitor 6 (234 aa).

Residues 1–24 (MMRSRFLLFIVFFSLSLFISSLIA) form the signal peptide. Met2 bears the N-acetylalanine mark. Cystatin domains lie at 38 to 126 (GGVG…KPAS) and 145 to 215 (SGWR…FKVE). A Secondary area of contact motif is present at residues 82-86 (QVVAG). Residues 133–154 (SSDLGCKQGEHESGWREVPGDD) form a disordered region. The span at 140–154 (QGEHESGWREVPGDD) shows a compositional bias: basic and acidic residues. A Phosphoserine modification is found at Ser174.

This sequence belongs to the cystatin family. Phytocystatin subfamily.

It localises to the secreted. In terms of biological role, specific inhibitor of cysteine proteinases. Probably involved in the regulation of endogenous processes and in defense against pests and pathogens. The protein is Cysteine proteinase inhibitor 6 (CYS6) of Arabidopsis thaliana (Mouse-ear cress).